We begin with the raw amino-acid sequence, 399 residues long: RNA polymerase sigma factor SigA1 (399 aa).

The interval 1 to 73 (MTQLISIDKE…DEDSVGEDED (73 aa)) is disordered. Positions 60–73 (DAIDDEDSVGEDED) are enriched in acidic residues. Residues 167–237 (MVQSNLRLVV…TRAIADQSRT (71 aa)) form a sigma-70 factor domain-2 region. The Interaction with polymerase core subunit RpoC motif lies at 191 to 194 (DLIQ). Positions 246–321 (ETISRIKKTT…EADGETPEDE (76 aa)) are sigma-70 factor domain-3. Residues 334 to 387 (VLSTLSPRERDVLRLRYGLDDGRMKTLEEIGQLFNVTRERIRQIEAKALRKLRH) are sigma-70 factor domain-4. The H-T-H motif DNA-binding region spans 360–379 (LEEIGQLFNVTRERIRQIEA).

Belongs to the sigma-70 factor family. RpoD/SigA subfamily. In terms of assembly, interacts transiently with the RNA polymerase catalytic core.

The protein localises to the cytoplasm. Functionally, sigma factors are initiation factors that promote the attachment of RNA polymerase to specific initiation sites and are then released. This sigma factor is the primary sigma factor during exponential growth. In Synechococcus elongatus (strain ATCC 33912 / PCC 7942 / FACHB-805) (Anacystis nidulans R2), this protein is RNA polymerase sigma factor SigA1.